Here is a 386-residue protein sequence, read N- to C-terminus: Succinate--CoA ligase [ADP-forming] subunit beta (386 aa).

Residues 9–244 (KHILSRFGVS…YDEEIKEEIE (236 aa)) enclose the ATP-grasp domain. ATP is bound by residues Lys46, 53–55 (GRG), Glu99, Cys102, and Glu107. Mg(2+) is bound by residues Asn199 and Asp213. Substrate is bound by residues Asn264 and 320–322 (GIM).

The protein belongs to the succinate/malate CoA ligase beta subunit family. As to quaternary structure, heterotetramer of two alpha and two beta subunits. Mg(2+) is required as a cofactor.

It catalyses the reaction succinate + ATP + CoA = succinyl-CoA + ADP + phosphate. The enzyme catalyses GTP + succinate + CoA = succinyl-CoA + GDP + phosphate. Its pathway is carbohydrate metabolism; tricarboxylic acid cycle; succinate from succinyl-CoA (ligase route): step 1/1. Its function is as follows. Succinyl-CoA synthetase functions in the citric acid cycle (TCA), coupling the hydrolysis of succinyl-CoA to the synthesis of either ATP or GTP and thus represents the only step of substrate-level phosphorylation in the TCA. The beta subunit provides nucleotide specificity of the enzyme and binds the substrate succinate, while the binding sites for coenzyme A and phosphate are found in the alpha subunit. The chain is Succinate--CoA ligase [ADP-forming] subunit beta from Ehrlichia canis (strain Jake).